The sequence spans 1104 residues: Lon protease homolog, mitochondrial (1104 aa).

Residues 1–58 (MLPLRAFARLAQRPRLSRPTQLARSSLPRPSPSRPAAHYLALAPAPSTRFLHSSPPVL) constitute a mitochondrion transit peptide. Disordered stretches follow at residues 8 to 144 (ARLA…KEVA) and 275 to 295 (EGSQ…SEVP). Positions 22 to 46 (LARSSLPRPSPSRPAAHYLALAPAP) are enriched in low complexity. Residues 80-103 (KQDDQVEKPLPDAESSKSAEERAK) are compositionally biased toward basic and acidic residues. The segment covering 104–128 (SQSSKPDIKASSSDSVSSSAPAPGS) has biased composition (low complexity). Residues 129-139 (ADGGSPPGAGG) show a composition bias toward gly residues. In terms of domain architecture, Lon N-terminal spans 155–444 (VLAIPITHRP…RALVLLKKEL (290 aa)). Basic and acidic residues predominate over residues 281–291 (AKGEGEVKSFE). ATP is bound at residue 597-604 (GPPGVGKT). A Lon proteolytic domain is found at 895 to 1082 (SPPAGVSTGL…RQVLHEAFRG (188 aa)). Active-site residues include Ser987 and Lys1030.

Belongs to the peptidase S16 family. In terms of assembly, homohexamer or homoheptamer. Organized in a ring with a central cavity.

It is found in the mitochondrion matrix. The enzyme catalyses Hydrolysis of proteins in presence of ATP.. ATP-dependent serine protease that mediates the selective degradation of misfolded, unassembled or oxidatively damaged polypeptides as well as certain short-lived regulatory proteins in the mitochondrial matrix. May also have a chaperone function in the assembly of inner membrane protein complexes. Participates in the regulation of mitochondrial gene expression and in the maintenance of the integrity of the mitochondrial genome. Binds to mitochondrial DNA in a site-specific manner. The chain is Lon protease homolog, mitochondrial from Cryptococcus neoformans var. neoformans serotype D (strain JEC21 / ATCC MYA-565) (Filobasidiella neoformans).